The following is a 63-amino-acid chain: Prokaryotic ubiquitin-like protein Pup (63 aa).

The segment covering 1-11 has biased composition (basic and acidic residues); sequence MAQEQTRRGGG. The disordered stretch occupies residues 1 to 36; the sequence is MAQEQTRRGGGGDDDEFTSSTSVGQERREKLTEETD. The ARC ATPase binding stretch occupies residues 20 to 57; the sequence is STSVGQERREKLTEETDDLLDEIDDVLEENAEDFVRAY. Positions 23-51 form a coiled coil; it reads VGQERREKLTEETDDLLDEIDDVLEENAE. Gln63 is subject to Deamidated glutamine. Residue Gln63 forms an Isoglutamyl lysine isopeptide (Gln-Lys) (interchain with K-? in acceptor proteins) linkage.

It belongs to the prokaryotic ubiquitin-like protein family. In terms of assembly, strongly interacts with the proteasome-associated ATPase ARC through a hydrophobic interface; the interacting region of Pup lies in its C-terminal half. There is one Pup binding site per ARC hexamer ring. Post-translationally, is modified by deamidation of its C-terminal glutamine to glutamate by the deamidase Dop, a prerequisite to the subsequent pupylation process.

The protein operates within protein degradation; proteasomal Pup-dependent pathway. Functionally, protein modifier that is covalently attached to lysine residues of substrate proteins, thereby targeting them for proteasomal degradation. The tagging system is termed pupylation. This Mycobacterium leprae (strain Br4923) protein is Prokaryotic ubiquitin-like protein Pup.